An 893-amino-acid polypeptide reads, in one-letter code: Sperm-associated antigen 1 (893 aa).

The span at 112–126 (ENTRHFHDPEKHPGV) shows a compositional bias: basic and acidic residues. The disordered stretch occupies residues 112-155 (ENTRHFHDPEKHPGVEDPLPPVRGSNSCPRGGKETSSKSKTAKK). TPR repeat units lie at residues 213–246 (ANREKGKGNEAFYSGDYEEAVMYYTRSLSALPTA), 247–279 (TAYNNRAQAEIKLQRWSSALEDCEKALELEPGN), and 280–313 (IKALLRRATTYKHQNKFLEAVDDLRKVLQAEPDN). Disordered regions lie at residues 324-344 (ERELKNSEPASELQTKGKRMV), 349-368 (ENSGDEGGKGDEDDHEDDGV), and 373-437 (MGNI…SRGN). Phosphoserine is present on Ser351. The segment covering 403–415 (QEGQPETGTASTS) has biased composition (polar residues). A compositionally biased stretch (basic and acidic residues) spans 416 to 437 (DNHDLEERRAADSPGDLKSRGN). 5 TPR repeats span residues 429 to 463 (PGDLKSRGNELFRGGQFAEAAVQYSGAIAQLEPTG), 471 to 504 (SILYSNRAACYLKEGNCRGCIQDCDRALELQPFA), 506 to 538 (KPLLRRAMAYETLEQYRSAYVDYITVLKIDCRI), 605 to 638 (FQALKEEGNQLVKDKNYKDAISKYNECLKINSKA), and 639 to 672 (CAIYTNRALCYLKLGQFEEAKLDCDKALQIDSKN). Residue 630 to 637 (ECLKINSK) participates in GTP binding. Ser703 is subject to Phosphoserine. The interval 704–756 (PDSSEAARHLDTKNDTAPPSRERERRRIEIQEVDDSSDEEPERPAEASAVEEG) is disordered. The segment covering 708 to 733 (EAARHLDTKNDTAPPSRERERRRIEI) has biased composition (basic and acidic residues). Positions 734–744 (QEVDDSSDEEP) are enriched in acidic residues. Ser739, Ser740, and Ser758 each carry phosphoserine.

As to expression, testis and sperm.

It is found in the cytoplasm. The protein resides in the dynein axonemal particle. Its function is as follows. May play a role in the cytoplasmic assembly of the ciliary dynein arms. Binds GTP and has GTPase activity. Plays a role in fertilization. The polypeptide is Sperm-associated antigen 1 (Spag1) (Rattus norvegicus (Rat)).